A 128-amino-acid chain; its full sequence is Putative protein SEM1, isoform 2 (128 aa).

Over residues 22 to 32 the composition is skewed to basic residues; it reads KHGIKRGRRPS. Residues 22-42 form a disordered region; sequence KHGIKRGRRPSIRSPAQRARG.

The polypeptide is Putative protein SEM1, isoform 2 (Homo sapiens (Human)).